The following is a 36-amino-acid chain: Photosystem I reaction center subunit VIII (36 aa).

Residues serine 8–leucine 28 traverse the membrane as a helical segment.

The protein belongs to the PsaI family.

The protein localises to the plastid. It is found in the chloroplast thylakoid membrane. Functionally, may help in the organization of the PsaL subunit. This is Photosystem I reaction center subunit VIII from Vitis vinifera (Grape).